Reading from the N-terminus, the 581-residue chain is Moesin/ezrin/radixin homolog 1 (581 aa).

The region spanning 8–298 (MNVRVTTMDA…GNHELYMRRR (291 aa)) is the FERM domain. Residues 452–519 (QVAKGSRAAA…EERRTLAERN (68 aa)) form a disordered region. Positions 459–469 (AAAALQAATTT) are enriched in low complexity. The segment covering 477–486 (EEEENEEELI) has biased composition (acidic residues). The span at 495–519 (FSKDFDTDEHIKDPVEERRTLAERN) shows a compositional bias: basic and acidic residues. Residue threonine 562 is modified to Phosphothreonine.

In terms of assembly, interacts with cytoskeletal actin.

The protein resides in the cell junction. It localises to the adherens junction. Its subcellular location is the cell projection. The protein localises to the microvillus. It is found in the rhabdomere. The protein resides in the cell membrane. It localises to the cytoplasm. Its subcellular location is the cytoskeleton. Its function is as follows. Involved in connections of major cytoskeletal structures to the plasma membrane. The polypeptide is Moesin/ezrin/radixin homolog 1 (Anopheles gambiae (African malaria mosquito)).